Reading from the N-terminus, the 418-residue chain is Glutamyl-tRNA reductase (418 aa).

Residues 49–52, Ser-109, 114–116, and Gln-120 each bind substrate; these read TCNR and EPQ. Cys-50 functions as the Nucleophile in the catalytic mechanism. 189–194 contacts NADP(+); sequence GAGETI.

Belongs to the glutamyl-tRNA reductase family. In terms of assembly, homodimer.

It catalyses the reaction (S)-4-amino-5-oxopentanoate + tRNA(Glu) + NADP(+) = L-glutamyl-tRNA(Glu) + NADPH + H(+). The protein operates within porphyrin-containing compound metabolism; protoporphyrin-IX biosynthesis; 5-aminolevulinate from L-glutamyl-tRNA(Glu): step 1/2. In terms of biological role, catalyzes the NADPH-dependent reduction of glutamyl-tRNA(Glu) to glutamate 1-semialdehyde (GSA). This Salmonella dublin (strain CT_02021853) protein is Glutamyl-tRNA reductase.